The chain runs to 317 residues: Methionyl-tRNA formyltransferase (317 aa).

Residue 111–114 coordinates (6S)-5,6,7,8-tetrahydrofolate; that stretch reads SLLP.

Belongs to the Fmt family.

The catalysed reaction is L-methionyl-tRNA(fMet) + (6R)-10-formyltetrahydrofolate = N-formyl-L-methionyl-tRNA(fMet) + (6S)-5,6,7,8-tetrahydrofolate + H(+). Functionally, attaches a formyl group to the free amino group of methionyl-tRNA(fMet). The formyl group appears to play a dual role in the initiator identity of N-formylmethionyl-tRNA by promoting its recognition by IF2 and preventing the misappropriation of this tRNA by the elongation apparatus. This Chlorobium phaeobacteroides (strain BS1) protein is Methionyl-tRNA formyltransferase.